Consider the following 283-residue polypeptide: tRNA pseudouridine synthase B (283 aa).

Residue aspartate 38 is the Nucleophile of the active site.

It belongs to the pseudouridine synthase TruB family. Type 1 subfamily.

The enzyme catalyses uridine(55) in tRNA = pseudouridine(55) in tRNA. In terms of biological role, responsible for synthesis of pseudouridine from uracil-55 in the psi GC loop of transfer RNAs. The protein is tRNA pseudouridine synthase B of Aster yellows witches'-broom phytoplasma (strain AYWB).